The sequence spans 385 residues: Acetate kinase (385 aa).

Position 9 (Asn9) interacts with Mg(2+). Lys16 lines the ATP pocket. Arg87 is a binding site for substrate. Residue Asp144 is the Proton donor/acceptor of the active site. Residues 202–206 (HLGSG) and 277–279 (DMR) contribute to the ATP site. Glu373 is a Mg(2+) binding site.

Belongs to the acetokinase family. Homodimer. It depends on Mg(2+) as a cofactor. Mn(2+) serves as cofactor.

The protein localises to the cytoplasm. It carries out the reaction acetate + ATP = acetyl phosphate + ADP. The protein operates within metabolic intermediate biosynthesis; acetyl-CoA biosynthesis; acetyl-CoA from acetate: step 1/2. Functionally, catalyzes the formation of acetyl phosphate from acetate and ATP. Can also catalyze the reverse reaction. The chain is Acetate kinase from Rickettsia typhi (strain ATCC VR-144 / Wilmington).